A 601-amino-acid chain; its full sequence is Elongation factor 4 (601 aa).

Residues 5-187 form the tr-type G domain; it reads EHIRNFSIIA…AIVERLPAPE (183 aa). GTP contacts are provided by residues 17–22 and 134–137; these read DHGKST and NKID.

This sequence belongs to the TRAFAC class translation factor GTPase superfamily. Classic translation factor GTPase family. LepA subfamily.

Its subcellular location is the cell inner membrane. It catalyses the reaction GTP + H2O = GDP + phosphate + H(+). In terms of biological role, required for accurate and efficient protein synthesis under certain stress conditions. May act as a fidelity factor of the translation reaction, by catalyzing a one-codon backward translocation of tRNAs on improperly translocated ribosomes. Back-translocation proceeds from a post-translocation (POST) complex to a pre-translocation (PRE) complex, thus giving elongation factor G a second chance to translocate the tRNAs correctly. Binds to ribosomes in a GTP-dependent manner. This chain is Elongation factor 4, found in Nitratidesulfovibrio vulgaris (strain ATCC 29579 / DSM 644 / CCUG 34227 / NCIMB 8303 / VKM B-1760 / Hildenborough) (Desulfovibrio vulgaris).